The primary structure comprises 524 residues: Solute carrier family 35 member F5 (524 aa).

Helical transmembrane passes span Met-69–Leu-89 and Phe-101–Trp-121. Position 207 is a phosphoserine (Ser-207). 8 helical membrane-spanning segments follow: residues Ile-244 to Ser-264, Ala-269 to Phe-289, Phe-297 to Leu-317, Thr-328 to Ile-348, Met-362 to Leu-382, Val-396 to Trp-416, Phe-421 to Ile-441, and Trp-453 to Cys-473. The EamA domain maps to Phe-253–Leu-317.

It belongs to the SLC35F solute transporter family.

It localises to the membrane. Functionally, putative solute transporter. This Mus musculus (Mouse) protein is Solute carrier family 35 member F5 (Slc35f5).